The following is a 532-amino-acid chain: IQ domain-containing protein IQM4 (532 aa).

Disordered stretches follow at residues 47–67 and 85–104; these read SRTNSFKSENPQEKSPKTGME and PMNKEDEEIVEPTKPARNSL. Residues 56–66 are compositionally biased toward basic and acidic residues; the sequence is NPQEKSPKTGM. A compositionally biased stretch (acidic residues) spans 85-94; it reads PMNKEDEEIV. The IQ domain occupies 136 to 165; sequence LDAAATTLQKVYKSYRTRRNLADCAVVVEE. Disordered stretches follow at residues 410 to 443 and 487 to 513; these read SSGYEEEATKEEEAEKKPAETIVTEEQEEEKERE and PRISPGSTRFPSPYGPIPSPRPSPRVR. The span at 487-496 shows a compositional bias: polar residues; it reads PRISPGSTRF. Residues 499–509 show a composition bias toward pro residues; that stretch reads PYGPIPSPRPS.

As to expression, expressed in roots, cauline leaves and flowers, and at lower levels in rosette leaves, stems and siliques.

It localises to the cytoplasm. Its subcellular location is the nucleus. In terms of biological role, may be involved in biotic and abiotic stress responses. In Arabidopsis thaliana (Mouse-ear cress), this protein is IQ domain-containing protein IQM4.